A 340-amino-acid polypeptide reads, in one-letter code: MSTDKITFLLNWQPTPYHIPIFLAQTKGYFKEQGLDIAILEPTNPSDVTELIGSGKVDMGLKAMIHTLAAKARGFPVTSVASLLDEPFTGVLYLKGSGITEDFQSLKGKKIGYVGEFGKIQIDELTKHYGMKPEDYTAVRCGMNVAKYIIEDKIDAGIGIECMQQVELEEYLAKQGRPASDAKMLRIDKLACLGCCCFCTVLYICNDEFLKKNPEKVRKFLKAIKKATDYVLADPVKAWKEYIDFKPQLNNDLSYKQYQRCYAYFSSSLYNVHRDWKKVTGYGKRLAILPPDYVSNYTNEYLSWPEPEEVSDPLEAQRLMAIHQEKCRQEGTFKRLALPA.

Lysine 62 is subject to N6-(pyridoxal phosphate)lysine. The active site involves histidine 66. Residue 115 to 118 participates in pyridoxal 5'-phosphate binding; sequence GEFG. Residues 195–199 carry the CCCFC; essential for catalytic activity, may be the site of iron coordination motif; that stretch reads CCCFC.

Belongs to the NMT1/THI5 family. In terms of assembly, homodimer. The cofactor is Fe cation.

The catalysed reaction is N(6)-(pyridoxal phosphate)-L-lysyl-[4-amino-5-hydroxymethyl-2-methylpyrimidine phosphate synthase] + L-histidyl-[4-amino-5-hydroxymethyl-2-methylpyrimidine phosphate synthase] + 2 Fe(3+) + 4 H2O = L-lysyl-[4-amino-5-hydroxymethyl-2-methylpyrimidine phosphate synthase] + (2S)-2-amino-5-hydroxy-4-oxopentanoyl-[4-amino-5-hydroxymethyl-2-methylpyrimidine phosphate synthase] + 4-amino-2-methyl-5-(phosphooxymethyl)pyrimidine + 3-oxopropanoate + 2 Fe(2+) + 2 H(+). The protein operates within cofactor biosynthesis; thiamine diphosphate biosynthesis. In terms of biological role, responsible for the formation of the pyrimidine heterocycle in the thiamine biosynthesis pathway. Catalyzes the formation of hydroxymethylpyrimidine phosphate (HMP-P) from histidine and pyridoxal phosphate (PLP). The protein uses PLP and the active site histidine to form HMP-P, generating an inactive enzyme. The enzyme can only undergo a single turnover, which suggests it is a suicide enzyme. The chain is 4-amino-5-hydroxymethyl-2-methylpyrimidine phosphate synthase THI11 from Saccharomyces cerevisiae (strain ATCC 204508 / S288c) (Baker's yeast).